The sequence spans 502 residues: Xylulose kinase (502 aa).

82 to 83 (MH) contributes to the substrate binding site. The Proton acceptor role is filled by aspartate 240.

The protein belongs to the FGGY kinase family.

The enzyme catalyses D-xylulose + ATP = D-xylulose 5-phosphate + ADP + H(+). Its function is as follows. Catalyzes the phosphorylation of D-xylulose to D-xylulose 5-phosphate. The chain is Xylulose kinase from Levilactobacillus brevis (Lactobacillus brevis).